A 313-amino-acid polypeptide reads, in one-letter code: Ribosomal RNA small subunit methyltransferase H (313 aa).

S-adenosyl-L-methionine-binding positions include 35 to 37 (GGH), Asp-55, Phe-80, Asp-102, and Gln-109.

It belongs to the methyltransferase superfamily. RsmH family.

Its subcellular location is the cytoplasm. It carries out the reaction cytidine(1402) in 16S rRNA + S-adenosyl-L-methionine = N(4)-methylcytidine(1402) in 16S rRNA + S-adenosyl-L-homocysteine + H(+). In terms of biological role, specifically methylates the N4 position of cytidine in position 1402 (C1402) of 16S rRNA. In Shewanella putrefaciens (strain CN-32 / ATCC BAA-453), this protein is Ribosomal RNA small subunit methyltransferase H.